We begin with the raw amino-acid sequence, 41 residues long: Fibrinogen beta chain (41 aa).

The segment at 1–41 (ADDYDDEVLPDARGHRPIDRKREELPSLRPAPPPISGGGYR) is disordered. The residue at position 4 (Y4) is a Sulfotyrosine. Over residues 10-26 (PDARGHRPIDRKREELP) the composition is skewed to basic and acidic residues. The beta-chain polymerization, binding distal domain of another fibrin stretch occupies residues 14–16 (GHR).

Heterohexamer; disulfide linked. Contains 2 sets of 3 non-identical chains (alpha, beta and gamma). The 2 heterotrimers are in head to head conformation with the N-termini in a small central domain. Conversion of fibrinogen to fibrin is triggered by thrombin, which cleaves fibrinopeptides A and B from alpha and beta chains, and thus exposes the N-terminal polymerization sites responsible for the formation of the soft clot.

The protein localises to the secreted. Its function is as follows. Cleaved by the protease thrombin to yield monomers which, together with fibrinogen alpha (FGA) and fibrinogen gamma (FGG), polymerize to form an insoluble fibrin matrix. Fibrin has a major function in hemostasis as one of the primary components of blood clots. In addition, functions during the early stages of wound repair to stabilize the lesion and guide cell migration during re-epithelialization. Was originally thought to be essential for platelet aggregation, based on in vitro studies using anticoagulated blood. However subsequent studies have shown that it is not absolutely required for thrombus formation in vivo. Enhances expression of SELP in activated platelets. Maternal fibrinogen is essential for successful pregnancy. Fibrin deposition is also associated with infection, where it protects against IFNG-mediated hemorrhage. May also facilitate the antibacterial immune response via both innate and T-cell mediated pathways. In Oryctolagus cuniculus (Rabbit), this protein is Fibrinogen beta chain (FGB).